The following is a 467-amino-acid chain: Peroxisome proliferator-activated receptor alpha (467 aa).

A DNA-binding region (nuclear receptor) is located at residues 99-173; it reads NIECRICGDK…VGMSHNAIRF (75 aa). 2 consecutive NR C4-type zinc fingers follow at residues 102 to 122 and 139 to 161; these read CRIC…CEGC and CDRS…FHKC. Residues 239–466 form the NR LBD domain; it reads FVIHDMETLC…PLLQEIYRDM (228 aa). Residues 304–433 are required for heterodimerization with RXRA; sequence DQVTLLKYGV…PKLLQKLADL (130 aa).

It belongs to the nuclear hormone receptor family. NR1 subfamily. As to quaternary structure, heterodimer; with RXRA. This heterodimerization is required for DNA binding and transactivation activity. Interacts with NCOA3 coactivator. Interacts with CITED2; the interaction stimulates its transcriptional activity. Also interacts with PPARBP in vitro. Interacts with AKAP13, LPIN1, PRDM16 and coactivator NCOA6. Interacts with ASXL1 and ASXL2. Interacts with PER2. Interacts with SIRT1; the interaction seems to be modulated by NAD(+) levels. Interacts with CRY1 and CRY2. In hepatocytes, interacts with PAQR3 and HUWE1; the interactions promote PPARA poylubiquitination and HUWE1-mediated degradation. In terms of processing, ubiquitinated by E3 ubiquitin-protein ligase HUWE1; leading to proteasomal degradation. Phosphorylated.

It is found in the nucleus. Functionally, ligand-activated transcription factor. Key regulator of lipid metabolism. Activated by the endogenous ligand 1-palmitoyl-2-oleoyl-sn-glycerol-3-phosphocholine (16:0/18:1-GPC). Activated by oleylethanolamide, a naturally occurring lipid that regulates satiety. Receptor for peroxisome proliferators such as hypolipidemic drugs and fatty acids. Regulates the peroxisomal beta-oxidation pathway of fatty acids. Functions as a transcription activator for the ACOX1 and P450 genes. Transactivation activity requires heterodimerization with RXRA and is antagonized by NR2C2. May be required for the propagation of clock information to metabolic pathways regulated by PER2. In Cavia porcellus (Guinea pig), this protein is Peroxisome proliferator-activated receptor alpha (PPARA).